The chain runs to 360 residues: Alpha-ketoglutarate dependent kainoid synthase (360 aa).

The Fe2OG dioxygenase domain occupies 200–310 (MFFSNRIYPE…RASLISFYEP (111 aa)). Fe cation contacts are provided by His-225, Asp-227, and His-286. A 2-oxoglutarate-binding site is contributed by Arg-301.

The protein belongs to the iron/ascorbate-dependent oxidoreductase family. Requires Fe(2+) as cofactor.

The catalysed reaction is prekainate + 2-oxoglutarate + O2 = kainate + succinate + CO2 + H2O. It catalyses the reaction prekainate + 2-oxoglutarate + O2 + H(+) = kainate lactone + succinate + CO2 + H2O. It participates in secondary metabolite biosynthesis. With respect to regulation, inhibited by the iron chelator EDTA. Functionally, iron/ascorbate-dependent oxidoreductase: part of the gene cluster that mediates the biosynthesis of kainic acid (KA) and derivatives, natural products with neurochemical activity acting as ionotropic glutamate receptor (iGluR) agonists, thus being neurotoxins. Catalyzes the conversion of prekainic acid to kainic acid and kainic acid lactone. The protein is Alpha-ketoglutarate dependent kainoid synthase of Digenea simplex (Marine red alga).